The sequence spans 214 residues: Melanoregulin (214 aa).

Residues 162-172 carry the Cholesterol-binding sequence motif motif; the sequence is LSERYLFVVDR. Position 213 is a phosphoserine (Ser-213).

The protein belongs to the melanoregulin family. In terms of assembly, identified in a complex with RILP and DCTN1; interacts directly with RILP, but does not interact directly with DCTN1. Interacts with PRPH2. In terms of processing, palmitoylated. Palmitoylation is required to maintain the protein at the melanosome membrane. In terms of tissue distribution, expressed in photoreceptor cells (at protein level).

The protein resides in the apical cell membrane. Its subcellular location is the melanosome membrane. The protein localises to the lysosome membrane. It is found in the cytoplasmic vesicle membrane. Probably functions as a cargo-recognition protein that couples cytoplasmic vesicles to the transport machinery. Plays a role in hair pigmentation, a process that involves shedding of melanosome-containing vesicles from melanocytes, followed by phagocytosis of the melanosome-containing vesicles by keratinocytes. Functions on melanosomes as receptor for RILP and the complex formed by RILP and DCTN1, and thereby contributes to retrograde melanosome transport from the cell periphery to the center. Overexpression causes accumulation of late endosomes and/or lysosomes at the microtubule organising center (MTOC) at the center of the cell. Probably binds cholesterol and requires the presence of cholesterol in membranes to function in microtubule-mediated retrograde organelle transport. Binds phosphatidylinositol 3-phosphate, phosphatidylinositol 4-phosphate, phosphatidylinositol 5-phosphate and phosphatidylinositol 3,5-bisphosphate, but not phosphatidylinositol 3,4-bisphosphate or phosphatidylinositol 4,5-bisphosphate. Required for normal phagosome clearing and normal activation of lysosomal enzymes in lysosomes from retinal pigment epithelium cells. Required for normal degradation of the lipofuscin component N-retinylidene-N-retinylethanolamine (A2E) in the eye. May function in membrane fusion and regulate the biogenesis of disk membranes of photoreceptor rod cells. This is Melanoregulin (MREG) from Homo sapiens (Human).